The sequence spans 377 residues: 3-(aryl)acrylate reductase (377 aa).

FAD contacts are provided by residues F121 to S130, F154 to T156, R266, Q277, and Q334 to G338. The active-site Proton acceptor is the E361. FAD is bound at residue T363 to E365.

Belongs to the acyl-CoA dehydrogenase family. FAD serves as cofactor.

It catalyses the reaction 3-phenylpropanoate + oxidized [electron-transfer flavoprotein] + H(+) = (E)-cinnamate + reduced [electron-transfer flavoprotein]. The catalysed reaction is phloretate + oxidized [electron-transfer flavoprotein] + H(+) = (E)-4-coumarate + reduced [electron-transfer flavoprotein]. The enzyme catalyses indole-3-propanoate + oxidized [electron-transfer flavoprotein] + H(+) = (E)-3-(indol-3-yl)acrylate + reduced [electron-transfer flavoprotein]. The protein operates within amino-acid degradation. Functionally, essential for the reductive metabolism of L-phenylalanine, L-tyrosine and L-tryptophan. Catalyzes the reduction of phenylacrylic acid to phenylpropionic acid, 4-hydroxy-phenylacrylic acid to 4-hydroxy-phenylpropionic acid, and indoleacrylic acid to indolepropionic acid. In Clostridium sporogenes (strain ATCC 15579), this protein is 3-(aryl)acrylate reductase.